A 595-amino-acid polypeptide reads, in one-letter code: Sorting nexin-9 (595 aa).

One can recognise an SH3 domain in the interval 1-62 (MATKARVMYD…PTDYVEILPS (62 aa)). The segment at 91-201 (SSSAASNNHQ…GNSRASSSSM (111 aa)) is disordered. Polar residues-rich tracts occupy residues 111–121 (WSASKSGNWES) and 135–145 (QRNTNTPNNWD). Residues Ser116 and Ser121 each carry the phosphoserine modification. Acidic residues predominate over residues 160–169 (GDDDDWDEDW). The segment covering 191 to 201 (RGNSRASSSSM) has biased composition (polar residues). Residues Ser197 and Ser200 each carry the phosphoserine modification. The interval 201–213 (MKIPLNKFPGFAK) is critical for tubulation activity. At Thr216 the chain carries Phosphothreonine. Tyr239 is subject to Phosphotyrosine. A PX domain is found at 250 to 361 (FDCVVADPRK…QFLNFRDEKE (112 aa)). A 1,2-diacyl-sn-glycero-3-phospho-(1D-myo-inositol-4,5-bisphosphate) is bound by residues Arg286, Lys288, and Arg327. Lys288 is subject to N6-acetyllysine. The region spanning 392–595 (LVEIEQKCEA…RQALSRFPVM (204 aa)) is the BAR domain.

Belongs to the sorting nexin family. In terms of assembly, homodimer, and homooligomer. Heterodimer with SNX18. Interacts with ITCH. Interacts (via SH3 domain) with TNK2, WASL and ACTR3. Identified in a complex with TNK2 and clathrin heavy chains. Identified in a complex with the AP-2 complex, clathrin and DNM2. Interacts (via SH3 domain) with DNM1 and DNM2. Identified in an oligomeric complex containing DNM1 and SNX9. Interacts with FCHSD1. Interacts with ADAM9 and ADAM15 cytoplasmic tails. Post-translationally, ubiquitinated by ITCH. In terms of processing, phosphorylated on tyrosine residues by TNK2. Phosphorylation promotes its activity in the degradation of EGFR. As to expression, widely expressed, with highest levels in heart and placenta, and lowest levels in thymus and peripheral blood leukocytes.

The protein resides in the cytoplasmic vesicle membrane. The protein localises to the cell membrane. It localises to the cytoplasmic vesicle. It is found in the clathrin-coated vesicle. Its subcellular location is the golgi apparatus. The protein resides in the trans-Golgi network. The protein localises to the cell projection. It localises to the ruffle. It is found in the cytoplasm. In terms of biological role, involved in endocytosis and intracellular vesicle trafficking, both during interphase and at the end of mitosis. Required for efficient progress through mitosis and cytokinesis. Required for normal formation of the cleavage furrow at the end of mitosis. Plays a role in endocytosis via clathrin-coated pits, but also clathrin-independent, actin-dependent fluid-phase endocytosis. Plays a role in macropinocytosis. Promotes internalization of TNFR. Promotes degradation of EGFR after EGF signaling. Stimulates the GTPase activity of DNM1. Promotes DNM1 oligomerization. Promotes activation of the Arp2/3 complex by WASL, and thereby plays a role in the reorganization of the F-actin cytoskeleton. Binds to membranes enriched in phosphatidylinositol 4,5-bisphosphate and promotes membrane tubulation. Has lower affinity for membranes enriched in phosphatidylinositol 3-phosphate. This Homo sapiens (Human) protein is Sorting nexin-9 (SNX9).